Reading from the N-terminus, the 421-residue chain is Trimethyllysine dioxygenase, mitochondrial (421 aa).

The transit peptide at 1–15 (MWYHKLLHQQSRLRN) directs the protein to the mitochondrion. Residues lysine 179 and lysine 236 each carry the N6-acetyllysine modification. Positions 242, 244, and 389 each coordinate Fe cation.

The protein belongs to the gamma-BBH/TMLD family. In terms of assembly, homodimer. The cofactor is Fe(2+). L-ascorbate is required as a cofactor.

It localises to the mitochondrion matrix. The enzyme catalyses N(6),N(6),N(6)-trimethyl-L-lysine + 2-oxoglutarate + O2 = (3S)-3-hydroxy-N(6),N(6),N(6)-trimethyl-L-lysine + succinate + CO2. It participates in amine and polyamine biosynthesis; carnitine biosynthesis. In terms of biological role, converts trimethyllysine (TML) into hydroxytrimethyllysine (HTML). This Mus musculus (Mouse) protein is Trimethyllysine dioxygenase, mitochondrial (Tmlhe).